A 451-amino-acid polypeptide reads, in one-letter code: tRNA-2-methylthio-N(6)-dimethylallyladenosine synthase (451 aa).

Residues 6-122 (RHYHITTFGC…LQDLLEQVFN (117 aa)) enclose the MTTase N-terminal domain. 6 residues coordinate [4Fe-4S] cluster: Cys-15, Cys-51, Cys-85, Cys-157, Cys-161, and Cys-164. The Radical SAM core domain maps to 143–380 (RDSKITAWVN…NHLVGVKAAD (238 aa)). The TRAM domain maps to 383–447 (QRYMGRIEEV…PFSLTGEVKE (65 aa)).

This sequence belongs to the methylthiotransferase family. MiaB subfamily. In terms of assembly, monomer. [4Fe-4S] cluster serves as cofactor.

Its subcellular location is the cytoplasm. It catalyses the reaction N(6)-dimethylallyladenosine(37) in tRNA + (sulfur carrier)-SH + AH2 + 2 S-adenosyl-L-methionine = 2-methylsulfanyl-N(6)-dimethylallyladenosine(37) in tRNA + (sulfur carrier)-H + 5'-deoxyadenosine + L-methionine + A + S-adenosyl-L-homocysteine + 2 H(+). Functionally, catalyzes the methylthiolation of N6-(dimethylallyl)adenosine (i(6)A), leading to the formation of 2-methylthio-N6-(dimethylallyl)adenosine (ms(2)i(6)A) at position 37 in tRNAs that read codons beginning with uridine. This chain is tRNA-2-methylthio-N(6)-dimethylallyladenosine synthase, found in Trichodesmium erythraeum (strain IMS101).